A 418-amino-acid polypeptide reads, in one-letter code: Mitochondrial outer membrane protein SLC25A46 (418 aa).

Phosphoserine occurs at positions 32 and 35. The residue at position 45 (Thr-45) is a Phosphothreonine. A disordered region spans residues 46–96 (PPDIPGSRNLHWGEKSPSYGVPSAPPTLEGPAEEPFPGGGDGPRPGRSSEQ). The stretch at 96–187 (QLNRFAGFGI…GIISEFTPLP (92 aa)) is one Solcar 1 repeat. The next 6 helical transmembrane spans lie at 103-123 (FGIG…CIVL), 167-187 (FIVQ…TPLP), 202-222 (HLLL…ASLI), 258-278 (LLPL…HYII), 314-334 (FPEL…LYPL), and 382-402 (VFGF…HATI). One copy of the Solcar 2 repeat lies at 311 to 416 (DAYFPELIAN…KIIYSTLLQN (106 aa)).

Belongs to the mitochondrial carrier (TC 2.A.29) family. In terms of assembly, associates with the mitochondrial contact site and cristae organizing system (MICOS) complex. May associate with the endoplasmic reticulum membrane protein complex (EMC). In terms of tissue distribution, widely expressed. Highly expressed in hindbrain, spinal cord and brain coronal sections containing corpus callosum, fornix, optic chiasm, thalamus, hypothalamus, midbrain, pons and cerebellum.

It is found in the mitochondrion outer membrane. In terms of biological role, transmembrane protein of the mitochondrial outer membrane that controls mitochondrial organization. May regulate the assembly of the MICOS (mitochondrial contact site and cristae organizing system) complex which is essential to the biogenesis and dynamics of mitochondrial cristae, the inwards folds of the inner mitochondrial membrane. Through its interaction with the EMC (endoplasmic reticulum membrane protein complex), could regulate mitochondrial lipid homeostasis and thereby mitochondrial fission. This is Mitochondrial outer membrane protein SLC25A46 from Rattus norvegicus (Rat).